The following is a 472-amino-acid chain: Mixed lineage kinase domain-like protein (472 aa).

The interval M1–D143 is N-terminal bundle and brace (NBB); mediates INSP6 binding. Residues L61–K81 are a coiled coil. S124 bears the Phosphoserine mark. A coiled-coil region spans residues Q138–V229. The region spanning G192–R456 is the Protein kinase domain. Residues L198–I206 and K219 each bind ATP. Phosphoserine; by RIPK3 is present on residues S345 and S347. A Phosphothreonine; by RIPK3 modification is found at T349. The residue at position 352 (S352) is a Phosphoserine; by RIPK3.

It belongs to the protein kinase superfamily. Homooligomer. Homotrimer; forms homotrimers on necroptosis induction. Upon TNF-induced necrosis, forms in complex with PGAM5, RIPK1 and RIPK3. Within this complex, may play a role in the proper targeting of RIPK1-RIPK3 to its downstream effector PGAM5. Interacts with RIPK3; the interaction is direct and promotes its phosphorylation and subsequent activation. In terms of processing, phosphorylation by RIPK3 induces a conformational switch that is required for necroptosis. It also induces homotrimerization and localization to the plasma membrane. Highly expressed in thymus, colon, intestine, liver, spleen and lung. Expressed at much lower level in skeletal muscle, heart and kidney. Not detected in brain.

It localises to the cytoplasm. Its subcellular location is the cell membrane. The protein resides in the nucleus. With respect to regulation, activated via binding to highly phosphorylated inositol phosphates such as inositolhexakisphosphate (InsP6) which mediates the release of an N-terminal auto-inhibitory region. Activation requires not only RIPK3-dependent phosphorylation but also binding to highly phosphorylated inositol phosphates. Pseudokinase that plays a key role in TNF-induced necroptosis, a programmed cell death process. Does not have protein kinase activity. Activated following phosphorylation by RIPK3, leading to homotrimerization, localization to the plasma membrane and execution of programmed necrosis characterized by calcium influx and plasma membrane damage. In addition to TNF-induced necroptosis, necroptosis can also take place in the nucleus in response to orthomyxoviruses infection: following ZBP1 activation, which senses double-stranded Z-RNA structures, nuclear RIPK3 catalyzes phosphorylation and activation of MLKL, promoting disruption of the nuclear envelope and leakage of cellular DNA into the cytosol. Binds to highly phosphorylated inositol phosphates such as inositolhexakisphosphate (InsP6) which is essential for its necroptotic function. In Mus musculus (Mouse), this protein is Mixed lineage kinase domain-like protein.